The following is a 476-amino-acid chain: Light-independent protochlorophyllide reductase subunit N (476 aa).

[4Fe-4S] cluster is bound by residues Cys31, Cys56, and Cys116.

It belongs to the BchN/ChlN family. As to quaternary structure, protochlorophyllide reductase is composed of three subunits; ChlL, ChlN and ChlB. Forms a heterotetramer of two ChlB and two ChlN subunits. [4Fe-4S] cluster is required as a cofactor.

It localises to the plastid. It is found in the chloroplast. It catalyses the reaction chlorophyllide a + oxidized 2[4Fe-4S]-[ferredoxin] + 2 ADP + 2 phosphate = protochlorophyllide a + reduced 2[4Fe-4S]-[ferredoxin] + 2 ATP + 2 H2O. The protein operates within porphyrin-containing compound metabolism; chlorophyll biosynthesis (light-independent). Component of the dark-operative protochlorophyllide reductase (DPOR) that uses Mg-ATP and reduced ferredoxin to reduce ring D of protochlorophyllide (Pchlide) to form chlorophyllide a (Chlide). This reaction is light-independent. The NB-protein (ChlN-ChlB) is the catalytic component of the complex. The protein is Light-independent protochlorophyllide reductase subunit N of Staurastrum punctulatum (Green alga).